Reading from the N-terminus, the 109-residue chain is Archaeosine synthase (109 aa).

Catalysis depends on cysteine 21, which acts as the Thioimide intermediate. Aspartate 28 (proton donor/acceptor) is an active-site residue. Substrate contacts are provided by residues aspartate 28, leucine 43 to glutamate 46, and histidine 62 to glutamate 63.

The protein belongs to the archaeosine synthase type 2 family. Forms a symmetric tunnel-fold (T-fold) homodecamer of two head-to-head facing pentameric subunits, with 10 active sites at the intermonomer interfaces.

It catalyses the reaction 7-cyano-7-carbaguanosine(15) in tRNA + NH4(+) = archaeosine(15) in tRNA. Its pathway is tRNA modification; archaeosine-tRNA biosynthesis. Its function is as follows. Is responsible for the final step in the biosynthesis of archaeosine, a modified nucleoside present in the dihydrouridine loop (D-loop) of archaeal tRNA. Catalyzes the conversion of 7-cyano-7-deazaguanine (preQ0)-modified tRNA to archaeosine-tRNA, transforming a nitrile group to a formamidine group. Can use neither glutamine nor asparagine as amino donor in vitro, is only able to utilize free ammonium. However, the enzyme might function in vivo with a partner that serves to generate ammonium. In Pyrobaculum calidifontis (strain DSM 21063 / JCM 11548 / VA1), this protein is Archaeosine synthase.